The following is a 768-amino-acid chain: Phosphoribosylformylglycinamidine synthase subunit PurL (768 aa).

His-46 is an active-site residue. Residues Tyr-49 and Lys-88 each coordinate ATP. Glu-90 is a Mg(2+) binding site. Substrate is bound by residues 91–94 (SHNH) and Arg-113. His-92 functions as the Proton acceptor in the catalytic mechanism. Asp-114 contacts Mg(2+). Gln-237 is a substrate binding site. Asp-265 lines the Mg(2+) pocket. Residue 309–311 (ESQ) participates in substrate binding. Residues Asp-514 and Gly-551 each contribute to the ATP site. Asn-552 contributes to the Mg(2+) binding site. Ser-554 serves as a coordination point for substrate.

This sequence belongs to the FGAMS family. Monomer. Part of the FGAM synthase complex composed of 1 PurL, 1 PurQ and 2 PurS subunits.

The protein localises to the cytoplasm. The enzyme catalyses N(2)-formyl-N(1)-(5-phospho-beta-D-ribosyl)glycinamide + L-glutamine + ATP + H2O = 2-formamido-N(1)-(5-O-phospho-beta-D-ribosyl)acetamidine + L-glutamate + ADP + phosphate + H(+). Its pathway is purine metabolism; IMP biosynthesis via de novo pathway; 5-amino-1-(5-phospho-D-ribosyl)imidazole from N(2)-formyl-N(1)-(5-phospho-D-ribosyl)glycinamide: step 1/2. Its function is as follows. Part of the phosphoribosylformylglycinamidine synthase complex involved in the purines biosynthetic pathway. Catalyzes the ATP-dependent conversion of formylglycinamide ribonucleotide (FGAR) and glutamine to yield formylglycinamidine ribonucleotide (FGAM) and glutamate. The FGAM synthase complex is composed of three subunits. PurQ produces an ammonia molecule by converting glutamine to glutamate. PurL transfers the ammonia molecule to FGAR to form FGAM in an ATP-dependent manner. PurS interacts with PurQ and PurL and is thought to assist in the transfer of the ammonia molecule from PurQ to PurL. The chain is Phosphoribosylformylglycinamidine synthase subunit PurL from Synechocystis sp. (strain ATCC 27184 / PCC 6803 / Kazusa).